The following is a 1007-amino-acid chain: Kinesin-like protein KIN-7D, chloroplastic (1007 aa).

A chloroplast-targeting transit peptide spans 1 to 53 (MATRPASRQRRASSAAAAVAVVRSSPQPQQQQQQQLPIPQSGSPTSTTTTTTS). The span at 1–55 (MATRPASRQRRASSAAAAVAVVRSSPQPQQQQQQQLPIPQSGSPTSTTTTTTSSS) shows a compositional bias: low complexity. A disordered region spans residues 1–79 (MATRPASRQR…LFAGLDEDPA (79 aa)). Residues 83–402 (NVTVTVRFRP…LKFAHRAKRI (320 aa)) enclose the Kinesin motor domain. 163-170 (GVTSSGKT) serves as a coordination point for ATP. Residues 403-495 (EVQASQNKII…QRLTKLILVS (93 aa)) are a coiled coil. The tract at residues 579 to 607 (ILTSSEGDKSSLTKSTAPSTPIGESVNFP) is disordered. 3 coiled-coil regions span residues 687–716 (NNEK…ERQI), 754–791 (AADN…TLQA), and 836–907 (SVEI…SVRS). A disordered region spans residues 901 to 941 (ELASVRSPTPRRANSGLRGTRRDSISRRHEPAPRRDNNAGY). The span at 920–941 (TRRDSISRRHEPAPRRDNNAGY) shows a compositional bias: basic and acidic residues. Residues 942–982 (EREKALEAVLMEKEQKEAELQRRIEESKQKEAFLESELANM) adopt a coiled-coil conformation.

Belongs to the TRAFAC class myosin-kinesin ATPase superfamily. Kinesin family. KIN-7 subfamily. Binds microtubules. Homodimer. The cofactor is Mg(2+).

It is found in the plastid. The protein localises to the chloroplast. In terms of biological role, probable minus end-directed motor protein with a microtubule-enhanced ATPase activity. Binds ATP/ADP in vitro. Retains total enzymatic activity even after the removal of the ADP bound in the active site. This is Kinesin-like protein KIN-7D, chloroplastic from Oryza sativa subsp. japonica (Rice).